Here is a 98-residue protein sequence, read N- to C-terminus: Pore-forming peptide amoebapore A (98 aa).

Residues 1–21 form the signal peptide; that stretch reads MKAIVFVLIFAVAFAVTATHQ. One can recognise a Saposin B-type domain in the interval 22 to 98; that stretch reads GEILCNLCTG…NAICAKIHAC (77 aa). Intrachain disulfides connect C26–C98, C29–C92, and C56–C67.

Monomer (at pH below 4 and pH above 6). Homodimer (at pH 4-6). Hexamer; formed during insertion in the membrane.

It is found in the cytoplasmic granule. In terms of biological role, forms pores in the cell membrane of host cells. Has antibacterial activity against M.luteus, no activity against E.coli. Implicated in the cytolytic activity of the parasite. The chain is Pore-forming peptide amoebapore A from Entamoeba histolytica (strain ATCC 30459 / HM-1:IMSS / ABRM).